We begin with the raw amino-acid sequence, 243 residues long: Probable transcriptional regulatory protein BG0025 (243 aa).

It belongs to the TACO1 family.

The protein resides in the cytoplasm. The protein is Probable transcriptional regulatory protein BG0025 of Borrelia garinii subsp. bavariensis (strain ATCC BAA-2496 / DSM 23469 / PBi) (Borreliella bavariensis).